The following is a 66-amino-acid chain: Large ribosomal subunit protein bL31 (66 aa).

Cysteine 16, cysteine 18, cysteine 36, and cysteine 39 together coordinate Zn(2+).

It belongs to the bacterial ribosomal protein bL31 family. Type A subfamily. Part of the 50S ribosomal subunit during exponential growth. Requires Zn(2+) as cofactor.

In terms of biological role, binds the 23S rRNA. While neither of the L31 paralogs is essential, this protein seems to function as the main L31 protein. Has a lower affinity for 70S ribosomes than the non-zinc-containing paralog L31B (ytiA); is displaced by it to varying extents, even under zinc-replete conditions. The polypeptide is Large ribosomal subunit protein bL31 (rpmE) (Bacillus subtilis (strain 168)).